A 144-amino-acid polypeptide reads, in one-letter code: Cell division protein SepF (144 aa).

The segment covering 14–31 has biased composition (acidic residues); the sequence is EDDEMNEVPYTESEEQQE. The interval 14 to 41 is disordered; it reads EDDEMNEVPYTESEEQQEEIPQTQKNER.

This sequence belongs to the SepF family. Homodimer. Interacts with FtsZ.

The protein localises to the cytoplasm. Cell division protein that is part of the divisome complex and is recruited early to the Z-ring. Probably stimulates Z-ring formation, perhaps through the cross-linking of FtsZ protofilaments. Its function overlaps with FtsA. The protein is Cell division protein SepF of Lactobacillus johnsonii (strain CNCM I-12250 / La1 / NCC 533).